An 812-amino-acid polypeptide reads, in one-letter code: Protein let-653 (812 aa).

The signal sequence occupies residues 1–21; it reads MRHPLISLLLLIAFYSTSSEA. Apple domains follow at residues 26-116 and 123-209; these read CNSF…WKYC and CSGE…ENNC. 6 disulfide bridges follow: C26–C116, C53–C88, C57–C72, C123–C209, C154–C178, and C158–C166. Residues N172, N211, and N272 are each glycosylated (N-linked (GlcNAc...) asparagine). One can recognise a ZP domain in the interval 221-725; it reads ECRDNGISVS…NTCDDVEGCD (505 aa). Low complexity-rich tracts occupy residues 375–449 and 496–584; these read QVTT…STTT and PTTT…PASS. Disordered stretches follow at residues 375 to 461 and 494 to 584; these read QVTT…STIM and DVPT…PASS. N771 carries an N-linked (GlcNAc...) asparagine glycan.

Cleaved at the C-terminal domain. In terms of tissue distribution, expressed in external cuticle-producing epithelial cells including the epidermis, vulva, rectum, excretory duct and excretory pore.

It localises to the apical cell membrane. It is found in the secreted. The protein resides in the extracellular space. Required for epithelial tube development and shaping. Involved in the morphogenesis and function of the three unicellular tubes of the excretory system, the canal cell, the duct cell and the pore cell. Also plays a role in cuticle development, alae formation and shaping of the vulval lumen. Required for larval development. The sequence is that of Protein let-653 from Caenorhabditis elegans.